The following is a 499-amino-acid chain: Apolipoprotein N-acyltransferase (499 aa).

The next 6 membrane-spanning stretches (helical) occupy residues 17 to 37 (VLAG…ALAL), 38 to 58 (LWSA…AVLL), 84 to 104 (ASIW…WAWL), 131 to 151 (IWGL…GVGG), 163 to 183 (LARW…GWWL), and 198 to 218 (RSLL…WSLL). The CN hydrolase domain occupies 232 to 458 (WQPAIPTRSK…EGVGLADLHF (227 aa)). E273 acts as the Proton acceptor in catalysis. Residue K322 is part of the active site. Residue C370 is the Nucleophile of the active site. A helical membrane pass occupies residues 474-494 (IGLMLFAVVGLGLSRVRSWLI).

It belongs to the CN hydrolase family. Apolipoprotein N-acyltransferase subfamily.

It is found in the cell inner membrane. The enzyme catalyses N-terminal S-1,2-diacyl-sn-glyceryl-L-cysteinyl-[lipoprotein] + a glycerophospholipid = N-acyl-S-1,2-diacyl-sn-glyceryl-L-cysteinyl-[lipoprotein] + a 2-acyl-sn-glycero-3-phospholipid + H(+). The protein operates within protein modification; lipoprotein biosynthesis (N-acyl transfer). Catalyzes the phospholipid dependent N-acylation of the N-terminal cysteine of apolipoprotein, the last step in lipoprotein maturation. This is Apolipoprotein N-acyltransferase from Prochlorococcus marinus (strain MIT 9313).